Reading from the N-terminus, the 131-residue chain is Small ribosomal subunit protein bS6 (131 aa).

The tract at residues 92–131 (RVDEHKDGPSVQMQKRDERERGDRGDRGERRERRDRDDRN) is disordered.

The protein belongs to the bacterial ribosomal protein bS6 family.

Binds together with bS18 to 16S ribosomal RNA. The protein is Small ribosomal subunit protein bS6 of Paracoccus denitrificans (strain Pd 1222).